The primary structure comprises 263 residues: Regulatory protein RecX (263 aa).

This sequence belongs to the RecX family.

The protein resides in the cytoplasm. Functionally, modulates RecA activity. The polypeptide is Regulatory protein RecX (Bacillus licheniformis (strain ATCC 14580 / DSM 13 / JCM 2505 / CCUG 7422 / NBRC 12200 / NCIMB 9375 / NCTC 10341 / NRRL NRS-1264 / Gibson 46)).